Consider the following 226-residue polypeptide: MRRAIRVMALSAIGLLLLPYLLTPLYRIGHPVSTLMIWRTLSGAPMSRQWIDFAALPPSLPRSVVASEDAKFCSHQGIDWDSLREVLDDAEDGEFKRGGSTITQQVAKNLFLWPGRSMVRKALEFPLAMWIDAVLSKQRILEIYLNIAEWGPGGQFGVEAGSRYAFGRSAASLTAREAALMAAILPNPVRRSARKPGPGVRRLAGTYMARARAAELRGCWSGNRSL.

Residues 7 to 29 form a helical membrane-spanning segment; sequence VMALSAIGLLLLPYLLTPLYRIG.

The protein belongs to the glycosyltransferase 51 family.

The protein resides in the cell inner membrane. The enzyme catalyses [GlcNAc-(1-&gt;4)-Mur2Ac(oyl-L-Ala-gamma-D-Glu-L-Lys-D-Ala-D-Ala)](n)-di-trans,octa-cis-undecaprenyl diphosphate + beta-D-GlcNAc-(1-&gt;4)-Mur2Ac(oyl-L-Ala-gamma-D-Glu-L-Lys-D-Ala-D-Ala)-di-trans,octa-cis-undecaprenyl diphosphate = [GlcNAc-(1-&gt;4)-Mur2Ac(oyl-L-Ala-gamma-D-Glu-L-Lys-D-Ala-D-Ala)](n+1)-di-trans,octa-cis-undecaprenyl diphosphate + di-trans,octa-cis-undecaprenyl diphosphate + H(+). Its pathway is cell wall biogenesis; peptidoglycan biosynthesis. Functionally, peptidoglycan polymerase that catalyzes glycan chain elongation from lipid-linked precursors. The polypeptide is Biosynthetic peptidoglycan transglycosylase (Nitrobacter winogradskyi (strain ATCC 25391 / DSM 10237 / CIP 104748 / NCIMB 11846 / Nb-255)).